Consider the following 101-residue polypeptide: Citrate lyase acyl carrier protein (101 aa).

Serine 14 is modified (O-(phosphoribosyl dephospho-coenzyme A)serine).

It belongs to the CitD family. In terms of assembly, oligomer with a subunit composition of (alpha,beta,gamma)6.

It localises to the cytoplasm. Its function is as follows. Covalent carrier of the coenzyme of citrate lyase. The polypeptide is Citrate lyase acyl carrier protein (Latilactobacillus sakei subsp. sakei (strain 23K) (Lactobacillus sakei subsp. sakei)).